Reading from the N-terminus, the 30-residue chain is Cycloviolacin-H1 (30 aa).

The cyclopeptide (Gly-Asn) cross-link spans G1–N30. Intrachain disulfides connect C4/C20, C8/C22, and C13/C27.

The protein belongs to the cyclotide family. Bracelet subfamily. In terms of processing, this is a cyclic peptide.

Probably participates in a plant defense mechanism. This chain is Cycloviolacin-H1, found in Viola hederacea (Australian violet).